The following is a 457-amino-acid chain: uncharacterized protein (457 aa).

This is an uncharacterized protein from Synechocystis sp. (strain ATCC 27184 / PCC 6803 / Kazusa).